The primary structure comprises 21 residues: 5-methyltetrahydropteroyltriglutamate--homocysteine methyltransferase (21 aa).

Belongs to the vitamin-B12 independent methionine synthase family. Zn(2+) is required as a cofactor.

Its subcellular location is the cytoplasm. The enzyme catalyses 5-methyltetrahydropteroyltri-L-glutamate + L-homocysteine = tetrahydropteroyltri-L-glutamate + L-methionine. Its pathway is amino-acid biosynthesis; L-methionine biosynthesis via de novo pathway; L-methionine from L-homocysteine (MetE route): step 1/1. Catalyzes the transfer of a methyl group from 5-methyltetrahydrofolate to homocysteine resulting in methionine formation. The sequence is that of 5-methyltetrahydropteroyltriglutamate--homocysteine methyltransferase from Populus euphratica (Euphrates poplar).